Consider the following 53-residue polypeptide: Weak toxin NWT (53 aa).

Disulfide bonds link Cys-6–Cys-11, Cys-17–Cys-33, and Cys-37–Cys-48.

This sequence belongs to the three-finger toxin family. Ancestral subfamily. Orphan group II sub-subfamily. Expressed by the venom gland.

The protein resides in the secreted. Functionally, binds with low affinity and weakly inhibits muscle nicotinic acetylcholine receptor (nAChR). The chain is Weak toxin NWT from Naja kaouthia (Monocled cobra).